Reading from the N-terminus, the 415-residue chain is tRNA (cytosine(38)-C(5))-methyltransferase (415 aa).

The 393-residue stretch at 4–396 folds into the SAM-dependent MTase C5-type domain; the sequence is LRVLELYSGI…TVLCEGFGNA (393 aa). S-adenosyl-L-methionine is bound by residues 13–15, aspartate 34, 57–58, and serine 76; these read IGG and IE. Residue cysteine 79 is part of the active site. Serine 376 contributes to the S-adenosyl-L-methionine binding site.

Belongs to the class I-like SAM-binding methyltransferase superfamily. C5-methyltransferase family. Highly expressed in thymus, testis, and at much lower levels in spleen, lung, brain, heart, kidney, liver, skeletal muscle and embryonic stem cells.

It is found in the cytoplasm. The enzyme catalyses cytidine(38) in tRNA + S-adenosyl-L-methionine = 5-methylcytidine(38) in tRNA + S-adenosyl-L-homocysteine + H(+). Its function is as follows. Specifically methylates cytosine 38 in the anticodon loop of tRNA(Asp). Has higher activity on tRNA(Asp) modified with queuosine at position 34. The polypeptide is tRNA (cytosine(38)-C(5))-methyltransferase (Trdmt1) (Mus musculus (Mouse)).